Consider the following 346-residue polypeptide: Glycerol-1-phosphate dehydrogenase [NAD(P)+] (346 aa).

NAD(+) contacts are provided by residues 93–97 (GTIID) and 115–118 (TTAS). D120 contributes to the substrate binding site. An NAD(+)-binding site is contributed by S124. D167 serves as a coordination point for substrate. The Zn(2+) site is built by D167 and H247. Residue H251 participates in substrate binding. H263 lines the Zn(2+) pocket.

The protein belongs to the glycerol-1-phosphate dehydrogenase family. Zn(2+) serves as cofactor.

It is found in the cytoplasm. The catalysed reaction is sn-glycerol 1-phosphate + NAD(+) = dihydroxyacetone phosphate + NADH + H(+). It carries out the reaction sn-glycerol 1-phosphate + NADP(+) = dihydroxyacetone phosphate + NADPH + H(+). Its pathway is membrane lipid metabolism; glycerophospholipid metabolism. In terms of biological role, catalyzes the NAD(P)H-dependent reduction of dihydroxyacetonephosphate (DHAP or glycerone phosphate) to glycerol 1-phosphate (G1P). The G1P thus generated is used as the glycerophosphate backbone of phospholipids in the cellular membranes of Archaea. This is Glycerol-1-phosphate dehydrogenase [NAD(P)+] from Pyrococcus furiosus (strain ATCC 43587 / DSM 3638 / JCM 8422 / Vc1).